Reading from the N-terminus, the 303-residue chain is N-acetyl-D-glucosamine kinase (303 aa).

ATP-binding positions include 4 to 11 (GFDIGGTK) and 133 to 140 (GVGGGLIF). Positions 157, 177, 179, and 184 each coordinate Zn(2+).

It belongs to the ROK (NagC/XylR) family. NagK subfamily.

The enzyme catalyses N-acetyl-D-glucosamine + ATP = N-acetyl-D-glucosamine 6-phosphate + ADP + H(+). It functions in the pathway cell wall biogenesis; peptidoglycan recycling. Functionally, catalyzes the phosphorylation of N-acetyl-D-glucosamine (GlcNAc) derived from cell-wall degradation, yielding GlcNAc-6-P. The polypeptide is N-acetyl-D-glucosamine kinase (Escherichia coli O6:H1 (strain CFT073 / ATCC 700928 / UPEC)).